Here is a 123-residue protein sequence, read N- to C-terminus: Large ribosomal subunit protein bL12 (123 aa).

Residues 96–123 (NVKEGVSKEEAEGLKKSLEEAGATVELK) form a disordered region. Residues 100–114 (GVSKEEAEGLKKSLE) are compositionally biased toward basic and acidic residues.

Belongs to the bacterial ribosomal protein bL12 family. In terms of assembly, homodimer. Part of the ribosomal stalk of the 50S ribosomal subunit. Forms a multimeric L10(L12)X complex, where L10 forms an elongated spine to which 2 to 4 L12 dimers bind in a sequential fashion. Binds GTP-bound translation factors.

Its function is as follows. Forms part of the ribosomal stalk which helps the ribosome interact with GTP-bound translation factors. Is thus essential for accurate translation. In Flavobacterium johnsoniae (strain ATCC 17061 / DSM 2064 / JCM 8514 / BCRC 14874 / CCUG 350202 / NBRC 14942 / NCIMB 11054 / UW101) (Cytophaga johnsonae), this protein is Large ribosomal subunit protein bL12.